A 398-amino-acid chain; its full sequence is 1-deoxy-D-xylulose 5-phosphate reductoisomerase (398 aa).

7 residues coordinate NADPH: Thr11, Gly12, Ser13, Ile14, Arg38, Asn39, and Asn125. Lys126 provides a ligand contact to 1-deoxy-D-xylulose 5-phosphate. Residue Glu127 participates in NADPH binding. Mn(2+) is bound at residue Asp151. 4 residues coordinate 1-deoxy-D-xylulose 5-phosphate: Ser152, Glu153, Ser179, and His202. Glu153 contacts Mn(2+). Gly208 is an NADPH binding site. Residues Ser215, Asn220, Lys221, and Glu224 each contribute to the 1-deoxy-D-xylulose 5-phosphate site. Mn(2+) is bound at residue Glu224.

It belongs to the DXR family. Mg(2+) serves as cofactor. Mn(2+) is required as a cofactor.

It carries out the reaction 2-C-methyl-D-erythritol 4-phosphate + NADP(+) = 1-deoxy-D-xylulose 5-phosphate + NADPH + H(+). Its pathway is isoprenoid biosynthesis; isopentenyl diphosphate biosynthesis via DXP pathway; isopentenyl diphosphate from 1-deoxy-D-xylulose 5-phosphate: step 1/6. Catalyzes the NADPH-dependent rearrangement and reduction of 1-deoxy-D-xylulose-5-phosphate (DXP) to 2-C-methyl-D-erythritol 4-phosphate (MEP). The polypeptide is 1-deoxy-D-xylulose 5-phosphate reductoisomerase (Burkholderia multivorans (strain ATCC 17616 / 249)).